The primary structure comprises 704 residues: Myb-related protein B (704 aa).

HTH myb-type domains follow at residues 26–77, 78–133, and 134–184; these read RDNR…LRVL, NPDL…NPEV, and KKSC…KRKV. The segment at residues 54-77 is a DNA-binding region (H-T-H motif); that stretch reads WKFLASHFPNRTDQQCQYRWLRVL. Residue lysine 104 forms a Glycyl lysine isopeptide (Lys-Gly) (interchain with G-Cter in SUMO2) linkage. DNA-binding regions (H-T-H motif) lie at residues 106 to 129 and 157 to 180; these read WTLIAKHLKGRLGKQCRERWHNHL and WAEIAKMLPGRTDNAVKNHWNSTI. Lysine 197 is covalently cross-linked (Glycyl lysine isopeptide (Lys-Gly) (interchain with G-Cter in SUMO2)). Threonine 267 is subject to Phosphothreonine. Lysine 275 participates in a covalent cross-link: Glycyl lysine isopeptide (Lys-Gly) (interchain with G-Cter in SUMO2). At serine 282 the chain carries Phosphoserine. The tract at residues 325–412 is disordered; the sequence is LSKFDLPEEP…GSGIGTPPSV (88 aa). Positions 339 to 366 are enriched in low complexity; that stretch reads SVVSSPVQPQTSQQQQEEALQSSQQAAT. A Phosphoserine modification is found at serine 396. Lysine 414 is covalently cross-linked (Glycyl lysine isopeptide (Lys-Gly) (interchain with G-Cter in SUMO2)). 2 positions are modified to phosphothreonine; by CDK2: threonine 443 and threonine 447. Residues lysine 450 and lysine 485 each participate in a glycyl lysine isopeptide (Lys-Gly) (interchain with G-Cter in SUMO2) cross-link. Residues threonine 490 and threonine 497 each carry the phosphothreonine; by CDK2 modification. Glycyl lysine isopeptide (Lys-Gly) (interchain with G-Cter in SUMO2) cross-links involve residues lysine 502 and lysine 513. Threonine 524 is subject to Phosphothreonine; by CDK2. Residues lysine 527, lysine 537, and lysine 550 each participate in a glycyl lysine isopeptide (Lys-Gly) (interchain with G-Cter in SUMO2) cross-link. Residue serine 581 is modified to Phosphoserine; by CDK2. Glycyl lysine isopeptide (Lys-Gly) (interchain with G-Cter in SUMO2) cross-links involve residues lysine 588 and lysine 600. The tract at residues 603–626 is disordered; it reads SSTMPKPLSLPTSVTPSSCGFTSP. Over residues 607–620 the composition is skewed to low complexity; sequence PKPLSLPTSVTPSS. Residues lysine 629, lysine 643, and lysine 652 each participate in a glycyl lysine isopeptide (Lys-Gly) (interchain with G-Cter in SUMO2) cross-link.

In terms of assembly, component of the DREAM complex (also named LINC complex) at least composed of E2F4, E2F5, LIN9, LIN37, LIN52, LIN54, MYBL1, MYBL2, RBL1, RBL2, RBBP4, TFDP1 and TFDP2. The complex exists in quiescent cells where it represses cell cycle-dependent genes. It dissociates in S phase when LIN9, LIN37, LIN52 and LIN54 form a subcomplex that binds to MYBL2. Interacts with CCNF (via the Cyclin N-terminal domain). Post-translationally, phosphorylated by cyclin A/CDK2 during S-phase. Phosphorylation at Thr-524 is probably involved in transcriptional activity.

It is found in the nucleus. In terms of biological role, transcription factor involved in the regulation of cell survival, proliferation, and differentiation. Transactivates the expression of the CLU gene. The polypeptide is Myb-related protein B (Mybl2) (Mus musculus (Mouse)).